Consider the following 287-residue polypeptide: Taxis protein CheF2 (287 aa).

As to quaternary structure, interacts with chemotaxis (Che) proteins as well as flagella accessory (Fla) proteins.

Involved in taxis signal transduction. This Halobacterium salinarum (strain ATCC 29341 / DSM 671 / R1) protein is Taxis protein CheF2 (cheF2).